A 259-amino-acid chain; its full sequence is Hydroxyacylglutathione hydrolase (259 aa).

Zn(2+)-binding residues include H56, H58, D60, H61, H112, D133, and H171.

This sequence belongs to the metallo-beta-lactamase superfamily. Glyoxalase II family. In terms of assembly, monomer. It depends on Zn(2+) as a cofactor.

It carries out the reaction an S-(2-hydroxyacyl)glutathione + H2O = a 2-hydroxy carboxylate + glutathione + H(+). It functions in the pathway secondary metabolite metabolism; methylglyoxal degradation; (R)-lactate from methylglyoxal: step 2/2. Its function is as follows. Thiolesterase that catalyzes the hydrolysis of S-D-lactoyl-glutathione to form glutathione and D-lactic acid. The polypeptide is Hydroxyacylglutathione hydrolase (Pseudomonas putida (strain W619)).